The following is a 440-amino-acid chain: Protein eva-1 homolog C (440 aa).

Pro residues predominate over residues 1–13 (MLLPGHPRPPPAP). The disordered stretch occupies residues 1–23 (MLLPGHPRPPPAPQSAQNQGLRR). The signal sequence occupies residues 1–48 (MLLPGHPRPPPAPQSAQNQGLRRQVEPPGQLLRLFYCTVLVCSKETSA). Residues 49–321 (LTDFSGYLTK…AYIRAHPERA (273 aa)) lie on the Extracellular side of the membrane. N-linked (GlcNAc...) asparagine glycans are attached at residues Asn-62, Asn-109, and Asn-165. The 93-residue stretch at 67–159 (ACDGDYLNLQ…KYLLVSFKCQ (93 aa)) folds into the SUEL-type lectin 1 domain. In terms of domain architecture, SUEL-type lectin 2 spans 168–260 (VCENQELKLH…KYLTVAYACV (93 aa)). A helical transmembrane segment spans residues 322 to 342 (ALLFMSSVCIGLLLTLCALVI). The Cytoplasmic portion of the chain corresponds to 343-440 (RVSCTKDFRE…SLPRNVGHFY (98 aa)). The segment at 364–384 (SDKAEEDSEEDLEEEDSSDSQ) is disordered. Positions 367 to 381 (AEEDSEEDLEEEDSS) are enriched in acidic residues.

Belongs to the EVA1 family. Ubiquitous.

The protein localises to the cell membrane. In terms of biological role, binds heparin. This Mus musculus (Mouse) protein is Protein eva-1 homolog C (Eva1c).